Reading from the N-terminus, the 516-residue chain is Putative F-box and FNIP repeat-containing protein L414 (516 aa).

The region spanning 4-49 is the F-box domain; it reads INDLNMDVILHLLTFLTDKNKLNFMMTCTHLYQFISCVKYNNFQLF. 5 FNIP repeats span residues 123-165, 166-208, 341-383, 385-428, and 429-470; these read FNHT…FGEN, FNKM…LMYS, YNPK…NFNG, YDNI…FGKL, and YNKP…FGYM.

This is Putative F-box and FNIP repeat-containing protein L414 from Acanthamoeba polyphaga (Amoeba).